A 2171-amino-acid chain; its full sequence is Voltage-dependent L-type calcium channel subunit alpha-1C (2171 aa).

The Cytoplasmic portion of the chain corresponds to 1 to 154 (MLRALVQPAT…RACISIVEWK (154 aa)). Residues 77-98 (GAALSWQAAIDAARQAKLMGSA) form a calmodulin-binding region. The disordered stretch occupies residues 103-128 (ISTVSSTQRKRQQYGKPKKQGSTTAT). The span at 110 to 121 (QRKRQQYGKPKK) shows a compositional bias: basic residues. The stretch at 141-438 (NPIRRACISI…LVLGVLSGEF (298 aa)) is one I repeat. The helical transmembrane segment at 155–173 (PFEIIILLTIFANCVALAI) threads the bilayer. Over 174–188 (YIPFPEDDSNATNSN) the chain is Extracellular. The N-linked (GlcNAc...) asparagine glycan is linked to asparagine 183. A helical membrane pass occupies residues 189 to 209 (LERVEYLFLIIFTVEAFLKVI). Topologically, residues 210–218 (AYGLLFHPN) are cytoplasmic. The helical transmembrane segment at 219-239 (AYLRNGWNLLDFIIVVVGLFS) threads the bilayer. Residues 240 to 262 (AILEQATKADGANALGGKGAGFD) are Extracellular-facing. Residues 263-281 (VKALRAFRVLRPLRLVSGV) traverse the membrane as a helical segment. The Cytoplasmic portion of the chain corresponds to 282–298 (PSLQVVLNSIIKAMVPL). Residues 299–320 (LHIALLVLFVIIIYAIIGLELF) traverse the membrane as a helical segment. Over 321–380 (MGKMHKTCYNQEGVADVPAEDDPSPCALETGHGRQCQNGTVCKPGWDGPKHGITNFDNFA) the chain is Extracellular. Disulfide bonds link cysteine 328–cysteine 356 and cysteine 346–cysteine 362. N-linked (GlcNAc...) asparagine glycosylation occurs at asparagine 358. An intramembrane region (pore-forming) is located at residues 381–402 (FAMLTVFQCITMEGWTDVLYWM). Positions 391–394 (TMEG) match the Selectivity filter of repeat I motif. Glutamate 393 provides a ligand contact to Ca(2+). Residues 403–410 (QDAMGYEL) lie on the Extracellular side of the membrane. A helical transmembrane segment spans residues 411 to 431 (PWVYFVSLVIFGSFFVLNLVL). Over 432–554 (GVLSGEFSKE…RKCRAAVKSN (123 aa)) the chain is Cytoplasmic. The AID/alpha-interaction domain; mediates interaction with the beta subunit stretch occupies residues 458–475 (QQLEEDLKGYLDWITQAE). The segment at 479 to 511 (PENEDEGMDEEKPRNMSMPTSETESVNTENVAG) is disordered. Polar residues predominate over residues 495-508 (SMPTSETESVNTEN). Phosphoserine is present on serine 499. Phosphothreonine is present on threonine 506. The II repeat unit spans residues 540 to 786 (NRFCRRKCRA…VFLAIAVDNL (247 aa)). A helical membrane pass occupies residues 555 to 573 (VFYWLVIFLVFLNTLTIAS). Residues 574 to 584 (EHYNQPHWLTE) lie on the Extracellular side of the membrane. A helical transmembrane segment spans residues 585 to 605 (VQDTANKALLALFTAEMLLKM). Residues 606–616 (YSLGLQAYFVS) are Cytoplasmic-facing. The helical transmembrane segment at 617-636 (LFNRFDCFIVCGGILETILV) threads the bilayer. Over 637–645 (ETKVMSPLG) the chain is Extracellular. The helical transmembrane segment at 646 to 664 (ISVLRCVRLLRIFKITRYW) threads the bilayer. Topologically, residues 665–683 (NSLSNLVASLLNSVRSIAS) are cytoplasmic. A helical membrane pass occupies residues 684–703 (LLLLLFLFIIIFSLLGMQLF). At 704-723 (GGKFNFDEMQTRRSTFDNFP) the chain is on the extracellular side. The segment at residues 724 to 745 (QSLLTVFQILTGEDWNSVMYDG) is an intramembrane region (pore-forming). Residues 734 to 737 (TGED) carry the Selectivity filter of repeat II motif. Ca(2+) is bound at residue glutamate 736. Topologically, residues 746-755 (IMAYGGPSFP) are extracellular. Residues 756-775 (GMLVCIYFIILFICGNYILL) form a helical membrane-spanning segment. At 776-930 (NVFLAIAVDN…LQCHRIVNDT (155 aa)) the chain is on the cytoplasmic side. Positions 794–891 (SAQKEEEEEK…EMPVGPRPRP (98 aa)) are disordered. A compositionally biased stretch (basic and acidic residues) spans 813 to 836 (SPEKKQEVVGKPALEEAKEEKIEL). Residues serine 838 and serine 845 each carry the phosphoserine modification. The segment at 859–906 (NESEDKSPYPNPETTGEEDEEEPEMPVGPRPRPLSELHLKEKAVPMPE) is interaction with STAC2. The span at 873–882 (TGEEDEEEPE) shows a compositional bias: acidic residues. The III repeat unit spans residues 917-1199 (NRFRLQCHRI…IFVGFVIVTF (283 aa)). The helical transmembrane segment at 931–949 (IFTNLILFFILLSSISLAA) threads the bilayer. Topologically, residues 950 to 961 (EDPVQHTSFRNH) are extracellular. A helical transmembrane segment spans residues 962 to 981 (ILFYFDIVFTTIFTIEIALK). Topologically, residues 982-997 (MTAYGAFLHKGSFCRN) are cytoplasmic. The helical transmembrane segment at 998 to 1016 (YFNILDLLVVSVSLISFGI) threads the bilayer. The Extracellular portion of the chain corresponds to 1017-1023 (QSSAINV). A helical membrane pass occupies residues 1024-1042 (VKILRVLRVLRPLRAINRA). Over 1043-1061 (KGLKHVVQCVFVAIRTIGN) the chain is Cytoplasmic. Residues 1062–1081 (IVIVTTLLQFMFACIGVQLF) form a helical membrane-spanning segment. Over 1082-1131 (KGKLYTCSDSSKQTEAECKGNYITYKDGEVDHPIIQPRSWENSKFDFDNV) the chain is Extracellular. Cysteine 1088 and cysteine 1099 form a disulfide bridge. Residues 1119 to 1208 (RSWENSKFDF…FQEQGEQEYK (90 aa)) form a dihydropyridine binding region. The segment at residues 1132-1152 (LAAMMALFTVSTFEGWPELLY) is an intramembrane region (pore-forming). The short motif at 1143–1146 (TFEG) is the Selectivity filter of repeat III element. Glutamate 1145 contributes to the Ca(2+) binding site. The Extracellular portion of the chain corresponds to 1153-1169 (RSIDSHTEDKGPIYNYR). Residues 1170-1191 (VEISIFFIIYIIIIAFFMMNIF) traverse the membrane as a helical segment. The Cytoplasmic portion of the chain corresponds to 1192–1249 (VGFVIVTFQEQGEQEYKNCELDKNQRQCVEYALKARPLRRYIPKNQHQYKVWYVVNST). The IV repeat unit spans residues 1236–1509 (NQHQYKVWYV…LFVAVIMDNF (274 aa)). The chain crosses the membrane as a helical span at residues 1250–1271 (YFEYLMFVLILLNTICLAMQHY). The Extracellular portion of the chain corresponds to 1272–1279 (GQSCLFKI). Residues 1280-1301 (AMNILNMLFTGLFTVEMILKLI) form a helical membrane-spanning segment. Over 1302-1311 (AFKPKGYFSD) the chain is Cytoplasmic. A helical transmembrane segment spans residues 1312–1331 (PWNVFDFLIVIGSIIDVILS). At 1332 to 1354 (ETNPAEHTQCSPSMNAEENSRIS) the chain is on the extracellular side. A helical membrane pass occupies residues 1355–1373 (ITFFRLFRVMRLVKLLSRG). Topologically, residues 1374 to 1391 (EGIRTLLWTFIKSFQALP) are cytoplasmic. A helical membrane pass occupies residues 1392–1412 (YVALLIVMLFFIYAVIGMQVF). Topologically, residues 1413–1434 (GKIALNDTTEINRNNNFQTFPQ) are extracellular. Asparagine 1418 is a glycosylation site (N-linked (GlcNAc...) asparagine). The segment at residues 1435 to 1453 (AVLLLFRCATGEAWQDIML) is an intramembrane region (pore-forming). A Selectivity filter of repeat IV motif is present at residues 1444 to 1447 (TGEA). Over 1454–1481 (ACMPGKKCAPESEPHNSTEGETPCGSSF) the chain is Extracellular. Residues 1460 to 1528 (KCAPESEPHN…LGPHHLDEFK (69 aa)) are dihydropyridine binding. Residues cysteine 1461 and cysteine 1477 are joined by a disulfide bond. Asparagine 1469 is a glycosylation site (N-linked (GlcNAc...) asparagine). The interval 1474–1516 (ETPCGSSFAVFYFISFYMLCAFLIINLFVAVIMDNFDYLTRDW) is phenylalkylamine binding. Residues 1482-1506 (AVFYFISFYMLCAFLIINLFVAVIM) traverse the membrane as a helical segment. Residues 1507-2171 (DNFDYLTRDW…ADRRAGVSSL (665 aa)) lie on the Cytoplasmic side of the membrane. Residues 1641–1668 (DEVTVGKFYATFLIQEYFRKFKKRKEQG) are important for interaction with STAC1, STAC2 and STAC3. The calmodulin-binding IQ region stretch occupies residues 1647-1667 (KFYATFLIQEYFRKFKKRKEQ). Residues 1681–1700 (LQAGLRTLHDIGPEIRRAIS) form an important for localization in at the junctional membrane region. Residues serine 1700 and serine 1721 each carry the phosphoserine modification. The disordered stretch occupies residues 1760–1797 (ISKAGNNQGDTESPSHEKLVDSTFTPSSYSSTGSNANI). A compositionally biased stretch (polar residues) spans 1781-1793 (STFTPSSYSSTGS). Position 1928 is a phosphoserine; by PKA (serine 1928). Disordered stretches follow at residues 1971-2014 (RSHS…EKLN), 2026-2060 (SGEN…GRQF), and 2114-2155 (SGGA…PGCG). Positions 2130-2140 (NRRDPGRDRAG) are enriched in basic and acidic residues.

It belongs to the calcium channel alpha-1 subunit (TC 1.A.1.11) family. CACNA1C subfamily. In terms of assembly, component of a calcium channel complex consisting of a pore-forming alpha subunit (CACNA1C) and ancillary beta, gamma and delta subunits. The channel complex contains alpha, beta, gamma and delta subunits in a 1:1:1:1 ratio, i.e. it contains only one of each type of subunit. CACNA1C channel activity is modulated by ancillary subunits, such as CACNB1, CACNB2, CACNB3, CACNA2D1 and CACNA2D4. Interacts with CACNB1. Interacts with CACNB2. Identified in a complex with CACNA2D4 and CACNB3. Interacts with CACNB3. Interacts with CACNA2D1. Interacts with the gamma subunits CACNG4, CACNG6, CACNG7 and CACNG8. Interacts with CACNA2D4. Interacts with CALM1. Interacts (via the N-terminus and the C-terminal C and IQ motifs) with CABP1; this inhibits Ca(2+)-dependent channel inactivation. The binding via the C motif is calcium independent whereas the binding via IQ requires the presence of calcium and is mutually exclusive with calmodulin binding. The binding to the cytoplasmic N-terminal domain is calcium independent but is essential for the channel modulation. Interacts (via C-terminal CDB motif) with CABP5; in a calcium-dependent manner. Interacts with CIB1; the interaction increases upon cardiomyocytes hypertrophy. Interacts with STAC1, STAC2 and STAC3; this inhibits channel inactivation, probably by hindering CALM1 binding. Phosphorylation by PKA at Ser-1928 activates the channel. Elevated levels of blood glucose lead to increased phosphorylation by PKA. Expression in cardiac muscle. In lung, expressed in airway and vascular smooth muscle cells.

Its subcellular location is the cell membrane. It is found in the sarcolemma. The protein localises to the perikaryon. It localises to the postsynaptic density membrane. The protein resides in the cell projection. Its subcellular location is the dendrite. It is found in the T-tubule. The enzyme catalyses Ca(2+)(in) = Ca(2+)(out). With respect to regulation, inhibited by dihydropyridines (DHP), such as isradipine. Inhibited by nifedipine. Channel activity is regulated by Ca(2+) and calmodulin. Binding of STAC1, STAC2 or STAC3 to a region that overlaps with the calmodulin binding site inhibits channel inactivation by Ca(2+) and calmodulin. Binding of calmodulin or CABP1 at the same regulatory sites results in opposite effects on the channel function. Shear stress and pressure increases calcium channel activity. Its function is as follows. Pore-forming, alpha-1C subunit of the voltage-gated calcium channel that gives rise to L-type calcium currents. Mediates influx of calcium ions into the cytoplasm, and thereby triggers calcium release from the sarcoplasm. Plays an important role in excitation-contraction coupling in the heart. Required for normal heart development and normal regulation of heart rhythm. Required for normal contraction of smooth muscle cells in blood vessels and in the intestine. Essential for normal blood pressure regulation via its role in the contraction of arterial smooth muscle cells. Long-lasting (L-type) calcium channels belong to the 'high-voltage activated' (HVA) group. This Oryctolagus cuniculus (Rabbit) protein is Voltage-dependent L-type calcium channel subunit alpha-1C (CACNA1C).